The following is a 98-amino-acid chain: NADH-ubiquinone oxidoreductase chain 4L (98 aa).

The next 3 helical transmembrane spans lie at 1–21 (MSLV…GLLM), 29–49 (SLLC…LTIL), and 59–79 (MPII…SLLV).

The protein belongs to the complex I subunit 4L family. In terms of assembly, core subunit of respiratory chain NADH dehydrogenase (Complex I) which is composed of 45 different subunits.

The protein resides in the mitochondrion inner membrane. The catalysed reaction is a ubiquinone + NADH + 5 H(+)(in) = a ubiquinol + NAD(+) + 4 H(+)(out). In terms of biological role, core subunit of the mitochondrial membrane respiratory chain NADH dehydrogenase (Complex I) which catalyzes electron transfer from NADH through the respiratory chain, using ubiquinone as an electron acceptor. Part of the enzyme membrane arm which is embedded in the lipid bilayer and involved in proton translocation. This Cervus elaphus (Red deer) protein is NADH-ubiquinone oxidoreductase chain 4L (MT-ND4L).